A 332-amino-acid polypeptide reads, in one-letter code: Casein kinase II subunit alpha (332 aa).

One can recognise a Protein kinase domain in the interval 43–327 (YEIIRKVGRG…TCQEAMAHPY (285 aa)). ATP-binding positions include 49-57 (VGRGKYSEV) and K72. Catalysis depends on D160, which acts as the Proton acceptor.

The protein belongs to the protein kinase superfamily. Ser/Thr protein kinase family. CK2 subfamily. As to quaternary structure, tetramer composed of two alpha chains, one beta chain and one beta' chain.

It carries out the reaction L-seryl-[protein] + ATP = O-phospho-L-seryl-[protein] + ADP + H(+). The catalysed reaction is L-threonyl-[protein] + ATP = O-phospho-L-threonyl-[protein] + ADP + H(+). Catalytic subunit of a constitutively active serine/threonine-protein kinase complex that phosphorylates a large number of substrates containing acidic residues C-terminal to the phosphorylated serine or threonine. This chain is Casein kinase II subunit alpha, found in Schizosaccharomyces pombe (strain 972 / ATCC 24843) (Fission yeast).